A 227-amino-acid chain; its full sequence is Ribosomal RNA large subunit methyltransferase E (227 aa).

S-adenosyl-L-methionine-binding residues include Gly-78, Trp-80, Asp-103, Asp-119, and Asp-143. Lys-183 acts as the Proton acceptor in catalysis.

This sequence belongs to the class I-like SAM-binding methyltransferase superfamily. RNA methyltransferase RlmE family.

Its subcellular location is the cytoplasm. The catalysed reaction is uridine(2552) in 23S rRNA + S-adenosyl-L-methionine = 2'-O-methyluridine(2552) in 23S rRNA + S-adenosyl-L-homocysteine + H(+). Functionally, specifically methylates the uridine in position 2552 of 23S rRNA at the 2'-O position of the ribose in the fully assembled 50S ribosomal subunit. The chain is Ribosomal RNA large subunit methyltransferase E from Rickettsia felis (strain ATCC VR-1525 / URRWXCal2) (Rickettsia azadi).